The chain runs to 69 residues: Cytochrome c oxidase subunit 8A, mitochondrial (69 aa).

A mitochondrion-targeting transit peptide spans 1-25 (MSVLTPLLLRGLTGPARRLPVPRAQ). The SIFI-degron motif lies at 2–19 (SVLTPLLLRGLTGPARRL). Topologically, residues 26–36 (IHSKPPREQLG) are mitochondrial matrix. A helical transmembrane segment spans residues 37–60 (TMDIAIGLTSCFLCFLLPSGWVLS). The Mitochondrial intermembrane segment spans residues 61–69 (HMENYKKRE).

It belongs to the cytochrome c oxidase VIII family. As to quaternary structure, component of the cytochrome c oxidase (complex IV, CIV), a multisubunit enzyme composed of 14 subunits. The complex is composed of a catalytic core of 3 subunits MT-CO1, MT-CO2 and MT-CO3, encoded in the mitochondrial DNA, and 11 supernumerary subunits COX4I1 (or COX4I2), COX5A, COX5B, COX6A2 (or COX6A1), COX6B1 (or COX6B2), COX6C, COX7A1 (or COX7A2), COX7B, COX7C, COX8B and NDUFA4, which are encoded in the nuclear genome. The complex exists as a monomer or a dimer and forms supercomplexes (SCs) in the inner mitochondrial membrane with NADH-ubiquinone oxidoreductase (complex I, CI) and ubiquinol-cytochrome c oxidoreductase (cytochrome b-c1 complex, complex III, CIII), resulting in different assemblies (supercomplex SCI(1)III(2)IV(1) and megacomplex MCI(2)III(2)IV(2)). In terms of processing, in response to mitochondrial stress, the precursor protein is ubiquitinated by the SIFI complex in the cytoplasm before mitochondrial import, leading to its degradation. Within the SIFI complex, UBR4 initiates ubiquitin chain that are further elongated or branched by KCMF1.

Its subcellular location is the mitochondrion inner membrane. It participates in energy metabolism; oxidative phosphorylation. Component of the cytochrome c oxidase, the last enzyme in the mitochondrial electron transport chain which drives oxidative phosphorylation. The respiratory chain contains 3 multisubunit complexes succinate dehydrogenase (complex II, CII), ubiquinol-cytochrome c oxidoreductase (cytochrome b-c1 complex, complex III, CIII) and cytochrome c oxidase (complex IV, CIV), that cooperate to transfer electrons derived from NADH and succinate to molecular oxygen, creating an electrochemical gradient over the inner membrane that drives transmembrane transport and the ATP synthase. Cytochrome c oxidase is the component of the respiratory chain that catalyzes the reduction of oxygen to water. Electrons originating from reduced cytochrome c in the intermembrane space (IMS) are transferred via the dinuclear copper A center (CU(A)) of subunit 2 and heme A of subunit 1 to the active site in subunit 1, a binuclear center (BNC) formed by heme A3 and copper B (CU(B)). The BNC reduces molecular oxygen to 2 water molecules using 4 electrons from cytochrome c in the IMS and 4 protons from the mitochondrial matrix. This Bos taurus (Bovine) protein is Cytochrome c oxidase subunit 8A, mitochondrial (COX8A).